The following is a 135-amino-acid chain: Small ribosomal subunit protein uS8 (135 aa).

It belongs to the universal ribosomal protein uS8 family. In terms of assembly, part of the 30S ribosomal subunit. Contacts proteins S5 and S12.

In terms of biological role, one of the primary rRNA binding proteins, it binds directly to 16S rRNA central domain where it helps coordinate assembly of the platform of the 30S subunit. The polypeptide is Small ribosomal subunit protein uS8 (Corynebacterium urealyticum (strain ATCC 43042 / DSM 7109)).